Here is a 73-residue protein sequence, read N- to C-terminus: Translation initiation factor IF-1 (73 aa).

Positions 1-73 (MDIKEEAIET…TKGRIVYREK (73 aa)) constitute an S1-like domain.

It belongs to the IF-1 family. Component of the 30S ribosomal translation pre-initiation complex which assembles on the 30S ribosome in the order IF-2 and IF-3, IF-1 and N-formylmethionyl-tRNA(fMet); mRNA recruitment can occur at any time during PIC assembly.

The protein localises to the cytoplasm. In terms of biological role, one of the essential components for the initiation of protein synthesis. Stabilizes the binding of IF-2 and IF-3 on the 30S subunit to which N-formylmethionyl-tRNA(fMet) subsequently binds. Helps modulate mRNA selection, yielding the 30S pre-initiation complex (PIC). Upon addition of the 50S ribosomal subunit IF-1, IF-2 and IF-3 are released leaving the mature 70S translation initiation complex. The chain is Translation initiation factor IF-1 from Borreliella afzelii (strain PKo) (Borrelia afzelii).